We begin with the raw amino-acid sequence, 133 residues long: MVNDSISDMLTRLRNAICAQHKVVQVPLTNINKNILKVLQKEGYIKNFEILFERKSGYLLVSLKYNSLNQDKPCLSVLKKISRPGLRMYVRTKKIPKVLGGTGIAIISTSKGVMTGSIARNLGIGGEILCYIW.

This sequence belongs to the universal ribosomal protein uS8 family. In terms of assembly, part of the 30S ribosomal subunit.

The protein resides in the plastid. The protein localises to the chloroplast. One of the primary rRNA binding proteins, it binds directly to 16S rRNA central domain where it helps coordinate assembly of the platform of the 30S subunit. The protein is Small ribosomal subunit protein uS8c (rps8) of Cyanidium caldarium (Red alga).